The sequence spans 420 residues: Calreticulin (420 aa).

Residues 1 to 25 (MAIRKGSSYAVAALLALASVAAVAG) form the signal peptide. N-linked (GlcNAc...) asparagine glycosylation is present at Asn-57. 4 residues coordinate an alpha-D-glucoside: Tyr-115, Lys-117, Tyr-134, and Asp-141. 7 repeat units span residues 197 to 208 (KHTGSIYEHWDI), 216 to 227 (DPEAKKPEDWDD), 233 to 244 (DPEDKKPEGYDD), 251 to 262 (DPDAKKPEDWDD), 266 to 276 (GEWTAPTIPNP), 280 to 290 (GPWKQKKIKNP), and 294 to 304 (GKWKAPMIDNP). Positions 197–262 (KHTGSIYEHW…DAKKPEDWDD (66 aa)) are 4 X approximate repeats. A compositionally biased stretch (basic and acidic residues) spans 213-258 (KIKDPEAKKPEDWDDKEYIPDPEDKKPEGYDDIPKEIPDPDAKKPE). The segment at 213–285 (KIKDPEAKKP…PEYKGPWKQK (73 aa)) is disordered. Positions 266–304 (GEWTAPTIPNPEYKGPWKQKKIKNPNYQGKWKAPMIDNP) are 3 X approximate repeats. Glu-324 provides a ligand contact to an alpha-D-glucoside. A compositionally biased stretch (basic and acidic residues) spans 355-381 (GKHKEAEKAAFDEAEKKKEEEDAAKGG). Positions 355-420 (GKHKEAEKAA…DSDDEKHDEL (66 aa)) are disordered. The segment covering 382-402 (DDEDDDLEDEEDDEKADEDKA) has biased composition (acidic residues). Residues 403-420 (DSDAEDGKDSDDEKHDEL) are compositionally biased toward basic and acidic residues. The short motif at 417 to 420 (HDEL) is the Prevents secretion from ER element.

This sequence belongs to the calreticulin family.

It is found in the endoplasmic reticulum lumen. Functionally, molecular calcium-binding chaperone promoting folding, oligomeric assembly and quality control in the ER via the calreticulin/calnexin cycle. This lectin may interact transiently with almost all of the monoglucosylated glycoproteins that are synthesized in the ER. This Zea mays (Maize) protein is Calreticulin (CRT).